Reading from the N-terminus, the 720-residue chain is Probable GTPase-activating protein GYL1 (720 aa).

N-acetylmethionine is present on M1. Positions 1-52 are enriched in basic and acidic residues; the sequence is MNSNEDIHEERIEVPRTPHQTQPEKDSDRIALRDEISVPEGDEKAYSDEKVE. The segment at 1–132 is disordered; that stretch reads MNSNEDIHEE…TSPPLPPRAD (132 aa). T17 carries the post-translational modification Phosphothreonine. Phosphoserine is present on S37. The span at 54 to 66 shows a compositional bias: polar residues; sequence ATTNASSNFGSNE. S73 carries the post-translational modification Phosphoserine. The span at 95–108 shows a compositional bias: polar residues; it reads SKTILPSDDLSQQL. A compositionally biased stretch (basic and acidic residues) spans 111–120; that stretch reads EESKVEEALK. Residue S139 is modified to Phosphoserine. Disordered regions lie at residues 144 to 164 and 179 to 210; these read SLPP…RPQL and APHG…PRRI. The segment covering 184–196 has biased composition (polar residues); the sequence is ATPSKSPTSAVGN. The Rab-GAP TBC domain occupies 297-477; it reads GIPAAYRLVV…RIGDMVFLEG (181 aa). A Glycyl lysine isopeptide (Lys-Gly) (interchain with G-Cter in SUMO) cross-link involves residue K498. Positions 572–696 form a coiled coil; it reads QYKSITEKNL…EIKTANKNGT (125 aa).

Belongs to the GYP5 family. As to quaternary structure, interacts with GYP5 and RVS167. Is part of SEC4-containing complexes.

The protein resides in the cytoplasm. It localises to the bud. The protein localises to the bud neck. Functionally, probable GTPase-activating protein which stimulates the GTP hydrolysis rate by GYP5 of YPT1 and SEC4. Involved in ER to Golgi trafficking and polarized exocytosis. This chain is Probable GTPase-activating protein GYL1 (GYL1), found in Saccharomyces cerevisiae (strain ATCC 204508 / S288c) (Baker's yeast).